The primary structure comprises 356 residues: Glutamine synthetase PR-2 (356 aa).

The GS beta-grasp domain occupies 19–99; sequence IIAEYIWVGG…VICDVYTPAG (81 aa). The interval 37–66 is disordered; it reads ARTLPGPVDDPAKLPKWNYDGSSTDQAPGD. Positions 106–356 constitute a GS catalytic domain; it reads KRYDAAKIFS…IAETTILWKP (251 aa).

The protein belongs to the glutamine synthetase family. Homooctamer. As to expression, roots.

The protein localises to the cytoplasm. It carries out the reaction L-glutamate + NH4(+) + ATP = L-glutamine + ADP + phosphate + H(+). The polypeptide is Glutamine synthetase PR-2 (Phaseolus vulgaris (Kidney bean)).